The primary structure comprises 404 residues: Neutral protease 2 homolog AFLA_065450 (404 aa).

The signal sequence occupies residues 1–19; the sequence is MRFISASSLLLALAPTLNA. The propeptide occupies 20-185; it reads VPVEVAGSAQ…TQAVKILERR (166 aa). 2 disulfide bridges follow: cysteine 191–cysteine 263 and cysteine 270–cysteine 288. Position 313 (histidine 313) interacts with Zn(2+). Glutamate 314 is an active-site residue. Histidine 317 and aspartate 328 together coordinate Zn(2+).

The protein belongs to the peptidase M35 family. It depends on Zn(2+) as a cofactor.

The protein localises to the secreted. The enzyme catalyses Preferential cleavage of bonds with hydrophobic residues in P1'. Also 3-Asn-|-Gln-4 and 8-Gly-|-Ser-9 bonds in insulin B chain.. Its function is as follows. Secreted metalloproteinase that allows assimilation of proteinaceous substrates. Shows high activities on basic nuclear substrates such as histone and protamine. This chain is Neutral protease 2 homolog AFLA_065450, found in Aspergillus flavus (strain ATCC 200026 / FGSC A1120 / IAM 13836 / NRRL 3357 / JCM 12722 / SRRC 167).